Consider the following 228-residue polypeptide: UPF0173 metal-dependent hydrolase PTH_1415 (228 aa).

The protein belongs to the UPF0173 family.

The protein is UPF0173 metal-dependent hydrolase PTH_1415 of Pelotomaculum thermopropionicum (strain DSM 13744 / JCM 10971 / SI).